The sequence spans 232 residues: Ubiquinone biosynthesis O-methyltransferase (232 aa).

The S-adenosyl-L-methionine site is built by Arg36, Gly55, Asp76, and Leu120.

The protein belongs to the methyltransferase superfamily. UbiG/COQ3 family.

It carries out the reaction a 3-demethylubiquinol + S-adenosyl-L-methionine = a ubiquinol + S-adenosyl-L-homocysteine + H(+). The enzyme catalyses a 3-(all-trans-polyprenyl)benzene-1,2-diol + S-adenosyl-L-methionine = a 2-methoxy-6-(all-trans-polyprenyl)phenol + S-adenosyl-L-homocysteine + H(+). It functions in the pathway cofactor biosynthesis; ubiquinone biosynthesis. In terms of biological role, O-methyltransferase that catalyzes the 2 O-methylation steps in the ubiquinone biosynthetic pathway. This chain is Ubiquinone biosynthesis O-methyltransferase, found in Pseudomonas syringae pv. tomato (strain ATCC BAA-871 / DC3000).